Here is a 98-residue protein sequence, read N- to C-terminus: Cobalt transport protein CbiN (98 aa).

The next 2 helical transmembrane spans lie at 6–26 (VLMI…YSGL) and 68–88 (SLLF…FFGY).

This sequence belongs to the CbiN family. As to quaternary structure, forms an energy-coupling factor (ECF) transporter complex composed of an ATP-binding protein (A component, CbiO), a transmembrane protein (T component, CbiQ) and 2 possible substrate-capture proteins (S components, CbiM and CbiN) of unknown stoichimetry.

Its subcellular location is the cell membrane. It functions in the pathway cofactor biosynthesis; adenosylcobalamin biosynthesis. Its function is as follows. Part of the energy-coupling factor (ECF) transporter complex CbiMNOQ involved in cobalt import. The sequence is that of Cobalt transport protein CbiN from Methanococcus maripaludis (strain DSM 14266 / JCM 13030 / NBRC 101832 / S2 / LL).